Reading from the N-terminus, the 821-residue chain is Ribonuclease R (821 aa).

The 327-residue stretch at 267–593 (RVDLRALPLV…LLHRAIKYLI (327 aa)) folds into the RNB domain. One can recognise an S1 motif domain in the interval 652–733 (GEELEGVVAN…DDRQIDFELV (82 aa)). The segment at 739-821 (LRGQGKTAKK…KSGKVRDKTK (83 aa)) is disordered. Basic and acidic residues-rich tracts occupy residues 748 to 764 (KRADEARAKAQGKKEAA) and 774 to 794 (TKSELKPQVEATRRPDSEGRS). Residues 795-814 (KPKKTKAPKKRKDQARKKSG) show a composition bias toward basic residues.

The protein belongs to the RNR ribonuclease family. RNase R subfamily.

Its subcellular location is the cytoplasm. The enzyme catalyses Exonucleolytic cleavage in the 3'- to 5'-direction to yield nucleoside 5'-phosphates.. Functionally, 3'-5' exoribonuclease that releases 5'-nucleoside monophosphates and is involved in maturation of structured RNAs. The sequence is that of Ribonuclease R from Vibrio cholerae serotype O1 (strain ATCC 39315 / El Tor Inaba N16961).